Reading from the N-terminus, the 233-residue chain is Superoxide dismutase [Mn], mitochondrial (233 aa).

The N-terminal 26 residues, 1–26 (MFAKTAAANLTKKGGLSLLSTTARRT), are a transit peptide targeting the mitochondrion. Mn(2+)-binding residues include His52 and His107. Phosphothreonine occurs at positions 147 and 149. Mn(2+) contacts are provided by Asp194 and His198.

This sequence belongs to the iron/manganese superoxide dismutase family. Homotetramer. Mn(2+) is required as a cofactor.

It localises to the mitochondrion matrix. The enzyme catalyses 2 superoxide + 2 H(+) = H2O2 + O2. Destroys superoxide anion radicals which are normally produced within the cells and which are toxic to biological systems. The chain is Superoxide dismutase [Mn], mitochondrial (SOD2) from Saccharomyces cerevisiae (strain ATCC 204508 / S288c) (Baker's yeast).